The primary structure comprises 237 residues: Proteasome subunit alpha (237 aa).

This sequence belongs to the peptidase T1A family. As to quaternary structure, the 20S proteasome core is composed of 14 alpha and 14 beta subunits that assemble into four stacked heptameric rings, resulting in a barrel-shaped structure. The two inner rings, each composed of seven catalytic beta subunits, are sandwiched by two outer rings, each composed of seven alpha subunits. The catalytic chamber with the active sites is on the inside of the barrel. Has a gated structure, the ends of the cylinder being occluded by the N-termini of the alpha-subunits. Is capped by the proteasome-associated ATPase, ARC.

It localises to the cytoplasm. The protein operates within protein degradation; proteasomal Pup-dependent pathway. Its activity is regulated as follows. The formation of the proteasomal ATPase ARC-20S proteasome complex, likely via the docking of the C-termini of ARC into the intersubunit pockets in the alpha-rings, may trigger opening of the gate for substrate entry. Interconversion between the open-gate and close-gate conformations leads to a dynamic regulation of the 20S proteasome proteolysis activity. Component of the proteasome core, a large protease complex with broad specificity involved in protein degradation. The chain is Proteasome subunit alpha from Kineococcus radiotolerans (strain ATCC BAA-149 / DSM 14245 / SRS30216).